The following is an 894-amino-acid chain: LRR receptor-like serine/threonine-protein kinase IOS1 (894 aa).

Positions 1–23 (MAFSSCFLLVLLQIFSALLLCLA) are cleaved as a signal peptide. Over 24–515 (QDQSGFISLD…KKKKNTVIAP (492 aa)) the chain is Extracellular. N-linked (GlcNAc...) asparagine glycosylation is found at Asn48, Asn95, Asn137, Asn179, Asn223, Asn230, Asn260, Asn287, Asn309, Asn338, Asn399, Asn441, Asn462, and Asn469. LRR repeat units lie at residues 431-457 (LTSL…NMET) and 459-479 (KLIN…LLDK). The helical transmembrane segment at 516 to 536 (VAASLVSVFLIGAGIVTFLIL) threads the bilayer. Residues 537-894 (KRKKRTKLGL…FTTELNPGAR (358 aa)) are Cytoplasmic-facing. The residue at position 577 (Thr577) is a Phosphothreonine. One can recognise a Protein kinase domain in the interval 586–858 (NNFERVLGRG…QVVMDLKECL (273 aa)). ATP is bound by residues 592–600 (LGRGGFGVV) and Lys613. Phosphotyrosine is present on Tyr658. Catalysis depends on Asp710, which acts as the Proton acceptor. Phosphoserine is present on Ser744. Phosphothreonine is present on residues Thr745 and Thr750. Tyr758 carries the phosphotyrosine modification.

This sequence belongs to the protein kinase superfamily. Ser/Thr protein kinase family. As to quaternary structure, homodimerization. Interacts with BAK1 and FLS2; triggers FLS2-BAK1 complex formation upon microbe-associated molecular patterns (MAMPs) treatment. Also binds to CERK1 and EFR. Expressed in roots, cotyledons, leaves, flowers and siliques.

Its subcellular location is the cell membrane. Functionally, negatively regulates the abscisic acid (ABA) signaling pathway. Required for full susceptibility to filamentous (hemi)biotrophic oomycetes (e.g. H.arabidopsidis and P.parasitica) and fungal (e.g. E.cruciferarum) pathogens, probably by triggering the repression of ABA-sensitive COLD REGULATED and RESISTANCE TO DESICCATION genes during infection, but independently of immune responses. Involved in BAK1-dependent and BAK1-independent microbe-associated molecular patterns (MAMPs)-triggered immunity (PTI) leading to defense responses, including callose deposition and MAPK cascade activation, toward pathogenic bacteria (e.g. P.syringae). Required for chitin-mediated PTI. This Arabidopsis thaliana (Mouse-ear cress) protein is LRR receptor-like serine/threonine-protein kinase IOS1.